The primary structure comprises 1246 residues: Probable membrane antigen 3 (1246 aa).

Its subcellular location is the virion tegument. This is Probable membrane antigen 3 (3) from Saimiri sciureus (Common squirrel monkey).